A 744-amino-acid chain; its full sequence is NAD(P)H-quinone oxidoreductase subunit 5, chloroplastic (744 aa).

The next 16 helical transmembrane spans lie at 9–29 (WIIP…LLLF), 40–60 (WAFQ…NLSI), 89–109 (IDPL…MVLI), 125–145 (FAYM…SNLI), 147–167 (IYIF…FWFT), 185–205 (GDFG…SFEF), 219–239 (NEVN…GAIA), 258–278 (TPIS…FLVA), 290–312 (IMNF…ALAQ), 327–347 (LGYM…FHLI), 354–374 (ALLF…VGYC), 396–416 (TSFL…CFWS), 425–445 (WLYS…TAFY), 549–569 (LFPI…GIPF), 608–628 (VFSV…YKPV), and 724–744 (YLFF…FLNF).

It belongs to the complex I subunit 5 family. As to quaternary structure, NDH is composed of at least 16 different subunits, 5 of which are encoded in the nucleus.

The protein localises to the plastid. Its subcellular location is the chloroplast thylakoid membrane. The enzyme catalyses a plastoquinone + NADH + (n+1) H(+)(in) = a plastoquinol + NAD(+) + n H(+)(out). It carries out the reaction a plastoquinone + NADPH + (n+1) H(+)(in) = a plastoquinol + NADP(+) + n H(+)(out). NDH shuttles electrons from NAD(P)H:plastoquinone, via FMN and iron-sulfur (Fe-S) centers, to quinones in the photosynthetic chain and possibly in a chloroplast respiratory chain. The immediate electron acceptor for the enzyme in this species is believed to be plastoquinone. Couples the redox reaction to proton translocation, and thus conserves the redox energy in a proton gradient. This chain is NAD(P)H-quinone oxidoreductase subunit 5, chloroplastic (ndhF), found in Adenocaulon himalaicum (Trailplant).